A 514-amino-acid chain; its full sequence is 1-pyrroline-5-carboxylate dehydrogenase (514 aa).

Active-site residues include glutamate 286 and cysteine 320.

Belongs to the aldehyde dehydrogenase family. RocA subfamily.

The enzyme catalyses L-glutamate 5-semialdehyde + NAD(+) + H2O = L-glutamate + NADH + 2 H(+). The protein operates within amino-acid degradation; L-proline degradation into L-glutamate; L-glutamate from L-proline: step 2/2. The sequence is that of 1-pyrroline-5-carboxylate dehydrogenase from Staphylococcus haemolyticus (strain JCSC1435).